A 633-amino-acid chain; its full sequence is Threonine--tRNA ligase (633 aa).

Residues M1–T61 enclose the TGS domain. A catalytic region spans residues D242–P533. 3 residues coordinate Zn(2+): C333, H384, and H510.

This sequence belongs to the class-II aminoacyl-tRNA synthetase family. As to quaternary structure, homodimer. It depends on Zn(2+) as a cofactor.

It is found in the cytoplasm. It catalyses the reaction tRNA(Thr) + L-threonine + ATP = L-threonyl-tRNA(Thr) + AMP + diphosphate + H(+). Functionally, catalyzes the attachment of threonine to tRNA(Thr) in a two-step reaction: L-threonine is first activated by ATP to form Thr-AMP and then transferred to the acceptor end of tRNA(Thr). Also edits incorrectly charged L-seryl-tRNA(Thr). In Ehrlichia ruminantium (strain Welgevonden), this protein is Threonine--tRNA ligase.